We begin with the raw amino-acid sequence, 210 residues long: Glutathione S-transferase 2 (210 aa).

One can recognise a GST N-terminal domain in the interval 1-80; that stretch reads MDFYYLPLSA…YLVEKYGKQN (80 aa). Glutathione contacts are provided by residues S9, 50–52, and 64–66; these read HTI and ESR. Residues 87 to 208 enclose the GST C-terminal domain; the sequence is CPKKRALINQ…AGCLEMKKYF (122 aa).

The protein belongs to the GST superfamily. Theta family. In terms of assembly, homodimer.

The catalysed reaction is RX + glutathione = an S-substituted glutathione + a halide anion + H(+). Functionally, conjugation of reduced glutathione to a wide number of exogenous and endogenous hydrophobic electrophiles. This is Glutathione S-transferase 2 (Gst2) from Musca domestica (House fly).